A 143-amino-acid polypeptide reads, in one-letter code: Putative pre-16S rRNA nuclease (143 aa).

The protein belongs to the YqgF nuclease family.

Its subcellular location is the cytoplasm. Could be a nuclease involved in processing of the 5'-end of pre-16S rRNA. The chain is Putative pre-16S rRNA nuclease from Crocosphaera subtropica (strain ATCC 51142 / BH68) (Cyanothece sp. (strain ATCC 51142)).